Reading from the N-terminus, the 44-residue chain is Photosystem II reaction center protein K (44 aa).

Residues 1–7 (MESLLLA) constitute a propeptide that is removed on maturation. Residues 23 to 43 (LPIIPVFFLLLAFVWQAAIGF) traverse the membrane as a helical segment.

The protein belongs to the PsbK family. As to quaternary structure, PSII is composed of 1 copy each of membrane proteins PsbA, PsbB, PsbC, PsbD, PsbE, PsbF, PsbH, PsbI, PsbJ, PsbK, PsbL, PsbM, PsbT, PsbX, PsbY, PsbZ, Psb30/Ycf12, at least 3 peripheral proteins of the oxygen-evolving complex and a large number of cofactors. It forms dimeric complexes.

Its subcellular location is the plastid. The protein resides in the chloroplast thylakoid membrane. Its function is as follows. One of the components of the core complex of photosystem II (PSII). PSII is a light-driven water:plastoquinone oxidoreductase that uses light energy to abstract electrons from H(2)O, generating O(2) and a proton gradient subsequently used for ATP formation. It consists of a core antenna complex that captures photons, and an electron transfer chain that converts photonic excitation into a charge separation. The protein is Photosystem II reaction center protein K of Trieres chinensis (Marine centric diatom).